Here is a 703-residue protein sequence, read N- to C-terminus: Polyribonucleotide nucleotidyltransferase (703 aa).

2 residues coordinate Mg(2+): Asp482 and Asp488. Positions 549–607 constitute a KH domain; the sequence is PKAQVMKIPEDKVGLVIGPAGKNIKYIKEQFGASVWIDGANAYINAPTIEAVNKAADFI. The 63-residue stretch at 617–679 folds into the S1 motif domain; that stretch reads GGVYEGKVIR…EQNRLNLCSP (63 aa). The tract at residues 677 to 703 is disordered; sequence CSPDYQKPENQERPRKEQLNRKPHHRK. A compositionally biased stretch (basic and acidic residues) spans 682–696; sequence QKPENQERPRKEQLN.

The protein belongs to the polyribonucleotide nucleotidyltransferase family. Requires Mg(2+) as cofactor.

It localises to the cytoplasm. It catalyses the reaction RNA(n+1) + phosphate = RNA(n) + a ribonucleoside 5'-diphosphate. In terms of biological role, involved in mRNA degradation. Catalyzes the phosphorolysis of single-stranded polyribonucleotides processively in the 3'- to 5'-direction. In Hydrogenobaculum sp. (strain Y04AAS1), this protein is Polyribonucleotide nucleotidyltransferase.